A 226-amino-acid polypeptide reads, in one-letter code: ATP-dependent dethiobiotin synthetase BioD (226 aa).

Residue 13-18 participates in ATP binding; that stretch reads DVGKTV. Thr17 is a binding site for Mg(2+). Residue Lys38 is part of the active site. Residues Asp55, 116 to 119, and 176 to 177 contribute to the ATP site; these read EGAG and NR. The Mg(2+) site is built by Asp55 and Glu116.

Belongs to the dethiobiotin synthetase family. Homodimer. The cofactor is Mg(2+).

It localises to the cytoplasm. It carries out the reaction (7R,8S)-7,8-diammoniononanoate + CO2 + ATP = (4R,5S)-dethiobiotin + ADP + phosphate + 3 H(+). Its pathway is cofactor biosynthesis; biotin biosynthesis; biotin from 7,8-diaminononanoate: step 1/2. Its function is as follows. Catalyzes a mechanistically unusual reaction, the ATP-dependent insertion of CO2 between the N7 and N8 nitrogen atoms of 7,8-diaminopelargonic acid (DAPA, also called 7,8-diammoniononanoate) to form a ureido ring. This Aliivibrio fischeri (strain MJ11) (Vibrio fischeri) protein is ATP-dependent dethiobiotin synthetase BioD.